A 391-amino-acid polypeptide reads, in one-letter code: Cyclin-B1-2 (391 aa).

It belongs to the cyclin family. Cyclin AB subfamily.

This Oryza sativa subsp. japonica (Rice) protein is Cyclin-B1-2 (CYCB1-2).